The sequence spans 430 residues: Gamma-glutamyl phosphate reductase (430 aa).

It belongs to the gamma-glutamyl phosphate reductase family.

It is found in the cytoplasm. It catalyses the reaction L-glutamate 5-semialdehyde + phosphate + NADP(+) = L-glutamyl 5-phosphate + NADPH + H(+). The protein operates within amino-acid biosynthesis; L-proline biosynthesis; L-glutamate 5-semialdehyde from L-glutamate: step 2/2. Its function is as follows. Catalyzes the NADPH-dependent reduction of L-glutamate 5-phosphate into L-glutamate 5-semialdehyde and phosphate. The product spontaneously undergoes cyclization to form 1-pyrroline-5-carboxylate. The chain is Gamma-glutamyl phosphate reductase from Polaromonas naphthalenivorans (strain CJ2).